Reading from the N-terminus, the 171-residue chain is Sec-independent protein translocase protein TatB (171 aa).

Residues 1–21 (MFDIGFSELLLVFIIGLVVLG) form a helical membrane-spanning segment. Residues 117-171 (KDNETAHEGVTPAAAQTQASSPEQKPETTPEPVVKPAADAEPKTAAPSPSSSDKP) form a disordered region. The span at 130 to 139 (AAQTQASSPE) shows a compositional bias: polar residues.

Belongs to the TatB family. The Tat system comprises two distinct complexes: a TatABC complex, containing multiple copies of TatA, TatB and TatC subunits, and a separate TatA complex, containing only TatA subunits. Substrates initially bind to the TatABC complex, which probably triggers association of the separate TatA complex to form the active translocon.

The protein localises to the cell inner membrane. Functionally, part of the twin-arginine translocation (Tat) system that transports large folded proteins containing a characteristic twin-arginine motif in their signal peptide across membranes. Together with TatC, TatB is part of a receptor directly interacting with Tat signal peptides. TatB may form an oligomeric binding site that transiently accommodates folded Tat precursor proteins before their translocation. The polypeptide is Sec-independent protein translocase protein TatB (Escherichia coli O6:K15:H31 (strain 536 / UPEC)).